The chain runs to 972 residues: Multiple C2 domain and transmembrane region protein 8 (972 aa).

The 107-residue stretch at 1 to 107 (MMSNLKLGVE…PYSEAVGLPY (107 aa)) folds into the C2 1 domain. Residues 142–203 (PNLISTKKIP…MMESSLYQAP (62 aa)) form a disordered region. Over residues 150–159 (IPSKSRHKFH) the composition is skewed to basic residues. Residues 161-173 (IPTNESNHSPRGN) show a composition bias toward polar residues. Over residues 179–194 (PQPPPPQSQTALPPPM) the composition is skewed to pro residues. C2 domains lie at 232 to 352 (GGGK…PEWY), 384 to 507 (ALNA…NRWF), and 543 to 669 (YSSD…SHSY). The Ca(2+) site is built by D265, D271, D318, D320, and D325. Helical transmembrane passes span 803 to 823 (IIFL…SLCL) and 924 to 944 (TVVL…LYIM).

It belongs to the MCTP family. The cofactor is Ca(2+). As to expression, expressed in root hairs.

The protein localises to the membrane. It localises to the vesicle. May function as a signaling molecule by regulating the trafficking of other regulators. This is Multiple C2 domain and transmembrane region protein 8 from Arabidopsis thaliana (Mouse-ear cress).